Consider the following 367-residue polypeptide: tRNA-specific 2-thiouridylase MnmA (367 aa).

Residues 12 to 19 and Met-38 contribute to the ATP site; that span reads GMSGGVDS. Residues 98–100 form an interaction with target base in tRNA region; the sequence is NPD. The active-site Nucleophile is the Cys-103. A disulfide bridge connects residues Cys-103 and Cys-200. Gly-128 is an ATP binding site. The interval 150 to 152 is interaction with tRNA; that stretch reads KDQ. Catalysis depends on Cys-200, which acts as the Cysteine persulfide intermediate. The interval 312 to 313 is interaction with tRNA; that stretch reads RY.

The protein belongs to the MnmA/TRMU family. In terms of assembly, interacts with TusE.

It is found in the cytoplasm. It catalyses the reaction S-sulfanyl-L-cysteinyl-[protein] + uridine(34) in tRNA + AH2 + ATP = 2-thiouridine(34) in tRNA + L-cysteinyl-[protein] + A + AMP + diphosphate + H(+). Catalyzes the 2-thiolation of uridine at the wobble position (U34) of tRNA(Lys), tRNA(Glu) and tRNA(Gln), leading to the formation of s(2)U34, the first step of tRNA-mnm(5)s(2)U34 synthesis. Sulfur is provided by IscS, via a sulfur-relay system. Binds ATP and its substrate tRNAs. This Photorhabdus laumondii subsp. laumondii (strain DSM 15139 / CIP 105565 / TT01) (Photorhabdus luminescens subsp. laumondii) protein is tRNA-specific 2-thiouridylase MnmA.